Consider the following 79-residue polypeptide: UPF0291 protein BH2353 (79 aa).

The interval 57–79 (GAGNDVTPDKLKQSKNKYRNDIH) is disordered. Residues 63–79 (TPDKLKQSKNKYRNDIH) are compositionally biased toward basic and acidic residues.

The protein belongs to the UPF0291 family.

It localises to the cytoplasm. The polypeptide is UPF0291 protein BH2353 (Halalkalibacterium halodurans (strain ATCC BAA-125 / DSM 18197 / FERM 7344 / JCM 9153 / C-125) (Bacillus halodurans)).